We begin with the raw amino-acid sequence, 73 residues long: Toxin Td9 (73 aa).

The signal sequence occupies residues 1-7; sequence IGMVAEC. In terms of domain architecture, LCN-type CS-alpha/beta spans 8–70; that stretch reads KDGYLVGDDG…IWNSATNSCG (63 aa). Intrachain disulfides connect Cys18–Cys69, Cys22–Cys44, Cys30–Cys50, and Cys34–Cys52. Lys71 bears the Lysine amide mark.

This sequence belongs to the long (4 C-C) scorpion toxin superfamily. Sodium channel inhibitor family. Beta subfamily. In terms of tissue distribution, expressed by the venom gland.

It is found in the secreted. Beta toxins bind voltage-independently at site-4 of sodium channels (Nav) and shift the voltage of activation toward more negative potentials thereby affecting sodium channel activation and promoting spontaneous and repetitive firing. The polypeptide is Toxin Td9 (Tityus discrepans (Venezuelan scorpion)).